An 88-amino-acid polypeptide reads, in one-letter code: Guanine nucleotide-binding protein subunit gamma (88 aa).

Residue Cys-84 is the site of S-palmitoyl cysteine attachment. Cys-85 carries the post-translational modification Cysteine methyl ester. Cys-85 carries the S-farnesyl cysteine lipid modification. The propeptide at Thr-86 to Met-88 is removed in mature form.

Belongs to the G protein gamma family. G proteins are composed of 3 units, alpha, beta and gamma.

The protein resides in the membrane. In Candida glabrata (strain ATCC 2001 / BCRC 20586 / JCM 3761 / NBRC 0622 / NRRL Y-65 / CBS 138) (Yeast), this protein is Guanine nucleotide-binding protein subunit gamma.